Consider the following 142-residue polypeptide: Large ribosomal subunit protein uL11 (142 aa).

Belongs to the universal ribosomal protein uL11 family. Part of the ribosomal stalk of the 50S ribosomal subunit. Interacts with L10 and the large rRNA to form the base of the stalk. L10 forms an elongated spine to which L12 dimers bind in a sequential fashion forming a multimeric L10(L12)X complex. Post-translationally, one or more lysine residues are methylated.

In terms of biological role, forms part of the ribosomal stalk which helps the ribosome interact with GTP-bound translation factors. In Xanthomonas oryzae pv. oryzae (strain MAFF 311018), this protein is Large ribosomal subunit protein uL11.